The following is a 152-amino-acid chain: Transcriptional regulator MraZ (152 aa).

SpoVT-AbrB domains are found at residues 5–52 and 81–124; these read ASAI…PIHE and AHEV…DEQS.

Belongs to the MraZ family. Forms oligomers.

Its subcellular location is the cytoplasm. The protein localises to the nucleoid. In Shewanella baltica (strain OS195), this protein is Transcriptional regulator MraZ.